The chain runs to 146 residues: 3-hydroxyacyl-[acyl-carrier-protein] dehydratase FabZ (146 aa).

His-49 is a catalytic residue.

This sequence belongs to the thioester dehydratase family. FabZ subfamily.

It localises to the cytoplasm. The catalysed reaction is a (3R)-hydroxyacyl-[ACP] = a (2E)-enoyl-[ACP] + H2O. Its function is as follows. Involved in unsaturated fatty acids biosynthesis. Catalyzes the dehydration of short chain beta-hydroxyacyl-ACPs and long chain saturated and unsaturated beta-hydroxyacyl-ACPs. The sequence is that of 3-hydroxyacyl-[acyl-carrier-protein] dehydratase FabZ from Pseudomonas savastanoi pv. phaseolicola (strain 1448A / Race 6) (Pseudomonas syringae pv. phaseolicola (strain 1448A / Race 6)).